A 451-amino-acid polypeptide reads, in one-letter code: Secreted RxLR effector protein 70 (451 aa).

A signal peptide spans 1–17; the sequence is MRGAYYIITALLVVASS. Positions 48 to 65 match the RxLR-dEER motif; the sequence is RFLRESRDVHDDLANEER. Positions 303–336 are disordered; it reads DAPSNSKHTLGGNKDSSSATTLHKHSKGLSSRPF. Polar residues predominate over residues 305–323; that stretch reads PSNSKHTLGGNKDSSSATT.

Belongs to the RxLR effector family.

It localises to the secreted. It is found in the host nucleus. Secreted effector that completely suppresses the host cell death induced by cell death-inducing proteins. The polypeptide is Secreted RxLR effector protein 70 (Plasmopara viticola (Downy mildew of grapevine)).